The sequence spans 476 residues: Ribulose bisphosphate carboxylase large chain (476 aa).

Substrate-binding residues include Asn-124 and Thr-174. Catalysis depends on Lys-176, which acts as the Proton acceptor. Lys-178 contributes to the substrate binding site. Residues Lys-202, Asp-204, and Glu-205 each coordinate Mg(2+). The residue at position 202 (Lys-202) is an N6-carboxylysine. His-295 serves as the catalytic Proton acceptor. The substrate site is built by Arg-296, His-328, and Ser-380.

It belongs to the RuBisCO large chain family. Type I subfamily. As to quaternary structure, heterohexadecamer of 8 large chains and 8 small chains; disulfide-linked. The disulfide link is formed within the large subunit homodimers. It depends on Mg(2+) as a cofactor. Post-translationally, the disulfide bond which can form in the large chain dimeric partners within the hexadecamer appears to be associated with oxidative stress and protein turnover.

Its subcellular location is the carboxysome. It catalyses the reaction 2 (2R)-3-phosphoglycerate + 2 H(+) = D-ribulose 1,5-bisphosphate + CO2 + H2O. The catalysed reaction is D-ribulose 1,5-bisphosphate + O2 = 2-phosphoglycolate + (2R)-3-phosphoglycerate + 2 H(+). RuBisCO catalyzes two reactions: the carboxylation of D-ribulose 1,5-bisphosphate, the primary event in carbon dioxide fixation, as well as the oxidative fragmentation of the pentose substrate in the photorespiration process. Both reactions occur simultaneously and in competition at the same active site. The protein is Ribulose bisphosphate carboxylase large chain of Nostoc punctiforme (strain ATCC 29133 / PCC 73102).